Consider the following 67-residue polypeptide: MRSKHNELKSPIMSCSKRMEWKSILSPLIFRQQMILTQNLNQKLKTIKVCMHRIQKLSKLKALYRGL.

Belongs to the rhabdoviruses C protein family.

Its function is as follows. Seems to stimulates transcription by the viral polymerase. May play a role in viral pathogenesis or transmission by insects vectors. In Vesicular stomatitis Indiana virus (strain San Juan) (VSIV), this protein is Protein C' (P).